The chain runs to 372 residues: Phenylalanine--tRNA ligase alpha subunit (372 aa).

E276 is a binding site for Mg(2+).

The protein belongs to the class-II aminoacyl-tRNA synthetase family. Phe-tRNA synthetase alpha subunit type 1 subfamily. In terms of assembly, tetramer of two alpha and two beta subunits. Requires Mg(2+) as cofactor.

The protein localises to the cytoplasm. The enzyme catalyses tRNA(Phe) + L-phenylalanine + ATP = L-phenylalanyl-tRNA(Phe) + AMP + diphosphate + H(+). The polypeptide is Phenylalanine--tRNA ligase alpha subunit (Thermobifida fusca (strain YX)).